The chain runs to 95 residues: MTKSELIERLASQQSHIPAKAVEDAVKEMLEHMASTLAQGERIEIRGFGSFSLHYRAPRTGRNPKTGDKVDLEGKYVPHFKPGKELRDRANIYGN.

Positions 57 to 76 (APRTGRNPKTGDKVDLEGKY) are disordered. Positions 65-76 (KTGDKVDLEGKY) are enriched in basic and acidic residues.

Belongs to the bacterial histone-like protein family. In terms of assembly, heterodimer of an alpha and a beta chain.

In terms of biological role, this protein is one of the two subunits of integration host factor, a specific DNA-binding protein that functions in genetic recombination as well as in transcriptional and translational control. This chain is Integration host factor subunit beta, found in Enterobacter sp. (strain 638).